The following is a 2643-amino-acid chain: BAH and coiled-coil domain-containing protein 1 (2643 aa).

Disordered stretches follow at residues 23 to 45 (SAAAAARLAPAGPAAQPAAHFQP) and 84 to 106 (SAASAHPSGPTSSPSEPAYRGSH). Position 220 is an N6-acetyllysine (Lys-220). 2 stretches are compositionally biased toward basic and acidic residues: residues 224–249 (KEKVSKGAEGRERPAVEEDSGKDRQK) and 683–702 (ERPDCARSREHEAPHGDGEV). 5 disordered regions span residues 224–273 (KEKV…SCEG), 674–704 (PATKGPGPVERPDCARSREHEAPHGDGEVRQ), 721–758 (GRPDTAYNTNSGRQGRAAPTFKGAGGPRASHALDLESE), 985–1023 (RKPEDRHMELEEAAQEKTPKSTHKPVALTPMAKGTPSSA), and 1038–1299 (TLKT…KALP). Residues 985 to 1003 (RKPEDRHMELEEAAQEKTP) are compositionally biased toward basic and acidic residues. The segment covering 1133–1149 (RPEPPRTFLPGEPPPCS) has biased composition (pro residues). Over residues 1210–1224 (ATGQTNSTQGGMQNE) the composition is skewed to polar residues. Over residues 1269–1284 (QEEETQLEESGGDSEV) the composition is skewed to acidic residues. Coiled-coil stretches lie at residues 1346-1373 (ALLSELADLETQRQKSELSMQEDEDVLA) and 1437-1486 (LKAA…SSRS). The span at 1466 to 1484 (QRELARLQRRHDHEREESS) shows a compositional bias: basic and acidic residues. 8 disordered regions span residues 1466–1520 (QREL…DSKK), 1537–1559 (GDEPPRKRSKLGKSPYTGLQSVS), 1604–1641 (KEAAPGGRIQKKLSRAKSVTASGAARHPHPDGDSGREM), 1746–1781 (RAPGRRPPGAPGKKKAKGKVKTGLRTEPGTATSRDT), 1875–1896 (FDEDDTSFSDEEEEEEEAGVQL), 2055–2124 (SSCR…HFLG), 2322–2341 (CPSSYSDEDEDGPGLATGVP), and 2349–2386 (SMSSSSSGSSTSSSSGSVSTSSLCSSDNEDSSYSSDDE). Residues 1487–1501 (PARRGPGRPRKRKHS) are compositionally biased toward basic residues. Over residues 1631–1641 (PHPDGDSGREM) the composition is skewed to basic and acidic residues. Residues 1757–1767 (GKKKAKGKVKT) show a composition bias toward basic residues. Positions 1875–1892 (FDEDDTSFSDEEEEEEEA) are enriched in acidic residues. Positions 2349-2374 (SMSSSSSGSSTSSSSGSVSTSSLCSS) are enriched in low complexity. The span at 2375–2386 (DNEDSSYSSDDE) shows a compositional bias: acidic residues. Residues 2517 to 2637 (ETLRIGDCAV…PTTGRLVTAD (121 aa)) enclose the BAH domain.

This chain is BAH and coiled-coil domain-containing protein 1 (Bahcc1), found in Mus musculus (Mouse).